Here is a 41-residue protein sequence, read N- to C-terminus: Large ribosomal subunit protein bL36 (41 aa).

A disordered region spans residues 1–21; that stretch reads MKIRNSLKSLRGRHRDNQLVR.

The protein belongs to the bacterial ribosomal protein bL36 family.

This chain is Large ribosomal subunit protein bL36, found in Methylobacterium sp. (strain 4-46).